Consider the following 912-residue polypeptide: Phosphatidylinositol-3-phosphatase SAC1 (912 aa).

Positions 1–29 are disordered; the sequence is MAKSENSTTSTFSSFANKIQPSNDAESDP. Residues 173–575 form the SAC domain; the sequence is LSSVDLTKDF…GDALAQQYGG (403 aa). A Phosphatase catalytic core motif is present at residues 511–522; sequence RTNCIDCLDRTN. The tract at residues 715-912 is required for subcellular localization; that stretch reads RPGGNTGSTG…VGDDKVPKVI (198 aa). A disordered region spans residues 740-766; the sequence is LFGSRKPEESSSATKSGADDSEKGVTS.

As to quaternary structure, component of the PI(3,5)P2 regulatory complex at least composed of ATG18, SAC/FIG4, FAB1 and VAC14. Requires Mg(2+) as cofactor. In terms of tissue distribution, ubiquitous with higher expression level in both young elongating and nonelongating stems. Detected in vascular tissues.

It localises to the vacuole membrane. The protein localises to the golgi apparatus. The enzyme catalyses a 1,2-diacyl-sn-glycero-3-phospho-(1D-myo-inositol-3-phosphate) + H2O = a 1,2-diacyl-sn-glycero-3-phospho-(1D-myo-inositol) + phosphate. It carries out the reaction a 1,2-diacyl-sn-glycero-3-phospho-(1D-myo-inositol-3,5-bisphosphate) + H2O = a 1,2-diacyl-sn-glycero-3-phospho-(1D-myo-inositol-3-phosphate) + phosphate. The catalysed reaction is a 1,2-diacyl-sn-glycero-3-phospho-(1D-myo-inositol 4-phosphate) + H2O = a 1,2-diacyl-sn-glycero-3-phospho-(1D-myo-inositol) + phosphate. Its function is as follows. Phosphoinositide phosphatase which catalyzes the hydrolysis of phosphatidylinositol-3,5-bisphosphate (PtdIns(3,5)P2). Can also catalyze the hydrolysis of phosphatidylinositol 3-phosphate (PtdIns(3)P) and phosphatidylinositol 4-phosphate (PtdIns(4)P). Required for normal cell morphogenesis, cell wall synthesis, and actin organization. The chain is Phosphatidylinositol-3-phosphatase SAC1 (SAC1) from Arabidopsis thaliana (Mouse-ear cress).